We begin with the raw amino-acid sequence, 59 residues long: Large ribosomal subunit protein uL30 (59 aa).

It belongs to the universal ribosomal protein uL30 family. As to quaternary structure, part of the 50S ribosomal subunit.

This Proteus mirabilis (strain HI4320) protein is Large ribosomal subunit protein uL30.